We begin with the raw amino-acid sequence, 351 residues long: Uroporphyrinogen decarboxylase (351 aa).

Substrate-binding positions include 26-30 (RQAGR), Phe-45, Asp-76, Tyr-153, Ser-208, and His-323.

It belongs to the uroporphyrinogen decarboxylase family. In terms of assembly, homodimer.

The protein resides in the cytoplasm. The catalysed reaction is uroporphyrinogen III + 4 H(+) = coproporphyrinogen III + 4 CO2. It functions in the pathway porphyrin-containing compound metabolism; protoporphyrin-IX biosynthesis; coproporphyrinogen-III from 5-aminolevulinate: step 4/4. Its function is as follows. Catalyzes the decarboxylation of four acetate groups of uroporphyrinogen-III to yield coproporphyrinogen-III. The sequence is that of Uroporphyrinogen decarboxylase from Prochlorococcus marinus (strain SARG / CCMP1375 / SS120).